We begin with the raw amino-acid sequence, 823 residues long: Probable inorganic carbon transporter subunit DabA (823 aa).

Zn(2+)-binding residues include Cys-361, Asp-363, His-527, and Cys-542.

This sequence belongs to the inorganic carbon transporter (TC 9.A.2) DabA family. In terms of assembly, forms a complex with DabB. Requires Zn(2+) as cofactor.

The protein resides in the cell inner membrane. With respect to regulation, intracellular DIC accumulation is sensitive to CCCP (carbonyl cyanide-m-chlorophenylhydrazone) and DCCD (N,N-dicyclohexylcarbodiimide) and therefore likely driven by either proton potential, ATP, or both. Its function is as follows. Part of an energy-coupled inorganic carbon pump. In terms of biological role, probably involved in transport of dissolved inorganic carbon (DIC) with upstream gene dabB (Tcr_0853); has been suggested to be a proton-DIC symporter. The chain is Probable inorganic carbon transporter subunit DabA from Hydrogenovibrio crunogenus (strain DSM 25203 / XCL-2) (Thiomicrospira crunogena).